A 183-amino-acid polypeptide reads, in one-letter code: MRKIVVAAIAVSLTTVSITASASADPSKDSKAQVSAAEAGITGTWYNQLGSTFIVTAGADGALTGTYESAVGNAESRYVLTGRYDSAPATDGSGTALGWTVAWKNNYRNAHSATTWSGQYVGGAEARINTQWLLTSGTTEANAWKSTLVGHDTFTKVKPSAASIDAAKKAGVNNGNPLDAVQQ.

The first 24 residues, 1–24 (MRKIVVAAIAVSLTTVSITASASA), serve as a signal peptide directing secretion. The Avidin-like domain maps to 37–159 (AEAGITGTWY…GHDTFTKVKP (123 aa)). Biotin contacts are provided by Y67 and Y78. The Cell attachment site; atypical signature appears at 83 to 85 (RYD). 3 residues coordinate biotin: W116, W132, and W144.

The protein belongs to the avidin/streptavidin family. Homotetramer.

It is found in the secreted. Its function is as follows. The biological function of streptavidin is not known. Forms a strong non-covalent specific complex with biotin (one molecule of biotin per subunit of streptavidin). The polypeptide is Streptavidin (Streptomyces avidinii).